Reading from the N-terminus, the 301-residue chain is Probable alpha-L-glutamate ligase 1 (301 aa).

Residues 104-287 (MQLMSRRGIG…VAGAIIEFVE (184 aa)) form the ATP-grasp domain. Residues Lys-141, 178 to 179 (EY), Asp-187, and 211 to 213 (RSN) each bind ATP. Asp-248, Glu-260, and Asn-262 together coordinate Mg(2+). 3 residues coordinate Mn(2+): Asp-248, Glu-260, and Asn-262.

It belongs to the RimK family. Requires Mg(2+) as cofactor. It depends on Mn(2+) as a cofactor.

The sequence is that of Probable alpha-L-glutamate ligase 1 from Shewanella putrefaciens (strain CN-32 / ATCC BAA-453).